A 536-amino-acid polypeptide reads, in one-letter code: GATA zinc finger domain-containing protein 9 (536 aa).

Polar residues-rich tracts occupy residues 1-20 and 36-55; these read MTSF…QPHS and CQSS…NPNA. Disordered stretches follow at residues 1-77, 183-211, 237-258, 273-342, and 370-423; these read MTSF…LSGS, SSSL…VVRS, RSAF…GGGS, QLHY…GFVQ, and ALFS…NISS. Low complexity predominate over residues 56-72; the sequence is TTNNTTTTTTTTTTTTN. Acidic residues predominate over residues 188–206; it reads SEDDDCCYETEEDDNGEDG. The span at 237–247 shows a compositional bias: basic residues; the sequence is RSAFKKNKKDY. Polar residues predominate over residues 273–283; the sequence is QLHYSNSMTDN. Composition is skewed to low complexity over residues 318–335 and 379–399; these read SNSN…NNNN and PSPT…NSGN. Residues 479–504 form a GATA-type zinc finger; the sequence is CRHCGTTDTPEWRRGPDGRKSLCNAC.

The protein is GATA zinc finger domain-containing protein 9 (gtaI) of Dictyostelium discoideum (Social amoeba).